Reading from the N-terminus, the 605-residue chain is Mini-chromosome maintenance complex-binding protein (605 aa).

A phosphoserine mark is found at Ser147 and Ser150.

The protein belongs to the MCMBP family. Interacts with the MCM complex.

It is found in the nucleus. Its function is as follows. Associated component of the MCM complex that acts as a regulator of DNA replication. Binds to the MCM complex during late S phase and may act by promoting the disassembly of the MCM complex from chromatin. The chain is Mini-chromosome maintenance complex-binding protein from Drosophila melanogaster (Fruit fly).